A 159-amino-acid polypeptide reads, in one-letter code: Small ribosomal subunit protein uS17x (159 aa).

Belongs to the universal ribosomal protein uS17 family.

It is found in the cytoplasm. The protein is Small ribosomal subunit protein uS17x (RPS11C) of Arabidopsis thaliana (Mouse-ear cress).